Here is an 827-residue protein sequence, read N- to C-terminus: Periplasmic nitrate reductase (827 aa).

Residues M1–A32 constitute a signal peptide (tat-type signal). The 4Fe-4S Mo/W bis-MGD-type domain maps to I37–D93. Residues C44, C47, C51, and C79 each contribute to the [4Fe-4S] cluster site. Mo-bis(molybdopterin guanine dinucleotide)-binding positions include K81, Q148, N173, C177, W210–M217, S241–H245, M371, Q375, N481, S507–D508, K530, D557, and T717–T726. F793 contacts substrate. Mo-bis(molybdopterin guanine dinucleotide)-binding residues include N801 and K818.

The protein belongs to the prokaryotic molybdopterin-containing oxidoreductase family. NasA/NapA/NarB subfamily. As to quaternary structure, component of the periplasmic nitrate reductase NapAB complex composed of NapA and NapB. [4Fe-4S] cluster is required as a cofactor. Mo-bis(molybdopterin guanine dinucleotide) serves as cofactor. Predicted to be exported by the Tat system. The position of the signal peptide cleavage has not been experimentally proven.

It localises to the periplasm. It catalyses the reaction 2 Fe(II)-[cytochrome] + nitrate + 2 H(+) = 2 Fe(III)-[cytochrome] + nitrite + H2O. In terms of biological role, catalytic subunit of the periplasmic nitrate reductase complex NapAB. Receives electrons from NapB and catalyzes the reduction of nitrate to nitrite. In Actinobacillus pleuropneumoniae serotype 7 (strain AP76), this protein is Periplasmic nitrate reductase.